A 501-amino-acid chain; its full sequence is Pentatricopeptide repeat-containing protein At4g14190, chloroplastic (501 aa).

Residues 1-88 (MENLTTAQFL…SGSCPLRLLQ (88 aa)) constitute a chloroplast transit peptide. PPR repeat units follow at residues 130 to 160 (SENNYERIIRFLCEEKSMSEAIRAFRSMIDD), 166 to 200 (SLEIYNSIIHSYADDGKFEEAMFYLNHMKENGLLP), 201 to 235 (ITETYDGLIEAYGKWKMYDEIVLCLKRMESDGCVR), 236 to 270 (DHVTYNLLIREFSRGGLLKRMEQMYQSLMSRKMTL), and 271 to 305 (EPSTLLSMLEAYAEFGLIEKMEETCNKIIRFGISL).

It belongs to the PPR family. P subfamily.

The protein localises to the plastid. Its subcellular location is the chloroplast. The chain is Pentatricopeptide repeat-containing protein At4g14190, chloroplastic from Arabidopsis thaliana (Mouse-ear cress).